A 1126-amino-acid polypeptide reads, in one-letter code: Formin-B (1126 aa).

Residues 1 to 21 (MFFKGKKKDKEKEKSHGNIGN) are disordered. Positions 38–406 (EQNLSNEDLK…LILKDPSKES (369 aa)) constitute a GBD/FH3 domain. Over residues 427-447 (LNNSNNNNNNNNSNNNNNDSN) the composition is skewed to low complexity. Residues 427–462 (LNNSNNNNNNNNSNNNNNDSNVSTPNINTGSPLLPP) form a disordered region. Positions 448–462 (VSTPNINTGSPLLPP) are enriched in polar residues. Positions 463–514 (QQYQDLEQKLQLTQNEKNESQNKVKQLESEIKGLNSTLTGLQLKVTKLEADL) form a coiled coil. Polar residues predominate over residues 518 to 532 (SVTTPPSDTNGTTSP). Disordered stretches follow at residues 518–619 (SVTT…SVPS) and 1004–1078 (ARKK…QNGT). The 85-residue stretch at 527–611 (NGTTSPPIEA…PGAPAVPNLP (85 aa)) folds into the FH1 domain. Positions 543–597 (GAPPPPPPPPPAPPVSGGGPPPPPPPPPPSSGGGPPPPPPPPSSGGPPPPPPPPG) are enriched in pro residues. Composition is skewed to low complexity over residues 598–607 (GMKKPGAPAV), 1009–1022 (AASG…SGSS), and 1032–1064 (SPIT…QQQQ). The FH2 domain maps to 612 to 1011 (PKKSSVPSVK…LAARKKAAAS (400 aa)). Residues 980 to 1010 (KFKNEFKRTIESIQKERENVQKLAARKKAAA) adopt a coiled-coil conformation. Positions 1071–1100 (DDIPQNGTFMDQLMSKMKGGEAIRASRRAS) constitute a DAD domain.

The protein belongs to the formin homology family. Diaphanous subfamily. As to quaternary structure, interacts (via GBD/FH3 domain) with activated Rho-GTPases. Interacts with pfyA and pfyB.

Functionally, formins play an important role in the nucleation of actin and the formation of linear actin filaments. This Dictyostelium discoideum (Social amoeba) protein is Formin-B (forB).